The chain runs to 362 residues: Golgi-resident adenosine 3',5'-bisphosphate 3'-phosphatase (362 aa).

Methionine 1 carries the post-translational modification N-acetylmethionine. Topologically, residues 1-12 (MAPMGIRLSPLG) are cytoplasmic. The chain crosses the membrane as a helical span at residues 13-33 (VAVFCLLGLGVLYHLYSGFLA). The Lumenal portion of the chain corresponds to 34–362 (GRFSLFGLGG…LPDLEKTGHK (329 aa)). The tract at residues 88 to 109 (RESNVLHEKSKGKTREGADDKM) is disordered. The Proton acceptor role is filled by aspartate 113. Positions 136, 177, 179, and 180 each coordinate Mg(2+). Threonine 182 (proton acceptor) is an active-site residue. Serine 245 and histidine 248 together coordinate AMP. Asparagine 262 carries an N-linked (GlcNAc...) asparagine glycan. AMP is bound by residues glycine 271 and lysine 275. Aspartate 303 contacts Mg(2+).

This sequence belongs to the inositol monophosphatase superfamily. Mg(2+) serves as cofactor. In terms of processing, contains N-linked glycan resistant to endoglycosydase H.

The protein resides in the golgi apparatus. Its subcellular location is the trans-Golgi network membrane. The catalysed reaction is adenosine 3',5'-bisphosphate + H2O = AMP + phosphate. It functions in the pathway sulfur metabolism. Its activity is regulated as follows. Strongly inhibited by lithium. Exhibits 3'-nucleotidase activity toward adenosine 3',5'-bisphosphate (PAP), namely hydrolyzes adenosine 3',5'-bisphosphate into adenosine 5'-monophosphate (AMP) and a phosphate. May play a role in the formation of skeletal elements derived through endochondral ossification, possibly by clearing adenosine 3',5'-bisphosphate produced by Golgi sulfotransferases during glycosaminoglycan sulfation. Has no activity toward 3'-phosphoadenosine 5'-phosphosulfate (PAPS) or inositol phosphate (IP) substrates including I(1)P, I(1,4)P2, I(1,3,4)P3, I(1,4,5)P3 and I(1,3,4,5)P4. This Bos taurus (Bovine) protein is Golgi-resident adenosine 3',5'-bisphosphate 3'-phosphatase (BPNT2).